Here is a 422-residue protein sequence, read N- to C-terminus: GTPase Obg (422 aa).

The Obg domain maps to 4-161 (LHFVDEAFNE…FKIKTELKVL (158 aa)). The region spanning 162–327 (ADIGLLGFPS…LKYEMSSLLQ (166 aa)) is the OBG-type G domain. Residues 168-175 (GFPSVGKS), 193-197 (FTTIK), 214-217 (DLPG), 281-284 (NKMD), and 308-310 (SLV) each bind GTP. Mg(2+) is bound by residues Ser-175 and Thr-195. Residues 345–422 (TLPDNQNTIS…KICDRLFYFL (78 aa)) form the OCT domain.

It belongs to the TRAFAC class OBG-HflX-like GTPase superfamily. OBG GTPase family. In terms of assembly, monomer. Requires Mg(2+) as cofactor.

It localises to the cytoplasm. Its function is as follows. An essential GTPase which binds GTP, GDP and possibly (p)ppGpp with moderate affinity, with high nucleotide exchange rates and a fairly low GTP hydrolysis rate. Plays a role in control of the cell cycle, stress response, ribosome biogenesis and in those bacteria that undergo differentiation, in morphogenesis control. This Onion yellows phytoplasma (strain OY-M) protein is GTPase Obg.